The following is a 120-amino-acid chain: Chaperonin GroEL (120 aa).

23 to 27 contributes to the ATP binding site; sequence DGTTT.

The protein belongs to the chaperonin (HSP60) family. Forms a cylinder of 14 subunits composed of two heptameric rings stacked back-to-back. Interacts with the co-chaperonin GroES.

The protein resides in the cytoplasm. The enzyme catalyses ATP + H2O + a folded polypeptide = ADP + phosphate + an unfolded polypeptide.. Its function is as follows. Together with its co-chaperonin GroES, plays an essential role in assisting protein folding. The GroEL-GroES system forms a nano-cage that allows encapsulation of the non-native substrate proteins and provides a physical environment optimized to promote and accelerate protein folding. This Mycolicibacter nonchromogenicus (Mycobacterium nonchromogenicum) protein is Chaperonin GroEL.